A 137-amino-acid polypeptide reads, in one-letter code: Peptide methionine sulfoxide reductase MsrB (137 aa).

A MsrB domain is found at 7–129; that stretch reads VDDLKENLSE…NSASLSFTDE (123 aa). Residues Cys-46, Cys-49, Cys-95, and Cys-98 each coordinate Zn(2+). Residue Cys-118 is the Nucleophile of the active site.

This sequence belongs to the MsrB Met sulfoxide reductase family. The cofactor is Zn(2+).

The enzyme catalyses L-methionyl-[protein] + [thioredoxin]-disulfide + H2O = L-methionyl-(R)-S-oxide-[protein] + [thioredoxin]-dithiol. This Escherichia fergusonii (strain ATCC 35469 / DSM 13698 / CCUG 18766 / IAM 14443 / JCM 21226 / LMG 7866 / NBRC 102419 / NCTC 12128 / CDC 0568-73) protein is Peptide methionine sulfoxide reductase MsrB.